The sequence spans 725 residues: Eukaryotic translation initiation factor 3 subunit B (725 aa).

Phosphoserine is present on serine 23. An RRM domain is found at 39-129 (TVVVIEGAPV…HTFVVRKLNQ (91 aa)). Phosphoserine is present on serine 135. At threonine 136 the chain carries Phosphothreonine. 3 WD repeats span residues 190–229 (DREN…MCAR), 304–344 (DGKK…LVDK), and 347–386 (IKID…QPAR). A coiled-coil region spans residues 630–671 (LTKEDMKKIRKKLKDYNRLFDEEDIAEQSSANRELAARRRQL).

The protein belongs to the eIF-3 subunit B family. In terms of assembly, component of the eukaryotic translation initiation factor 3 (eIF-3) complex. The eIF-3 complex appears to include tif32/eif3a, SPAC25G10.08/eif3b, tif33/eif3c, SPBC4C3.07/eif3f, tif35/eif3g and sum1/eif3i. This set of common subunits may also associate exclusively with either moe1/eif3d and int6/eif3e, or with SPAC821.05/eif3h and SPAC1751.03/eif3m. The eIF-3 complex may also include SPAC3A12.13c/eif3j.

It is found in the cytoplasm. In terms of biological role, RNA-binding component of the eukaryotic translation initiation factor 3 (eIF-3) complex, which is involved in protein synthesis of a specialized repertoire of mRNAs and, together with other initiation factors, stimulates binding of mRNA and methionyl-tRNAi to the 40S ribosome. The eIF-3 complex specifically targets and initiates translation of a subset of mRNAs involved in cell proliferation. The protein is Eukaryotic translation initiation factor 3 subunit B of Schizosaccharomyces pombe (strain 972 / ATCC 24843) (Fission yeast).